The sequence spans 254 residues: Aspartate/glutamate leucyltransferase (254 aa).

It belongs to the R-transferase family. Bpt subfamily.

Its subcellular location is the cytoplasm. The catalysed reaction is N-terminal L-glutamyl-[protein] + L-leucyl-tRNA(Leu) = N-terminal L-leucyl-L-glutamyl-[protein] + tRNA(Leu) + H(+). It catalyses the reaction N-terminal L-aspartyl-[protein] + L-leucyl-tRNA(Leu) = N-terminal L-leucyl-L-aspartyl-[protein] + tRNA(Leu) + H(+). Functionally, functions in the N-end rule pathway of protein degradation where it conjugates Leu from its aminoacyl-tRNA to the N-termini of proteins containing an N-terminal aspartate or glutamate. In Xylella fastidiosa (strain M12), this protein is Aspartate/glutamate leucyltransferase.